A 138-amino-acid polypeptide reads, in one-letter code: Putative nickel-responsive regulator (138 aa).

Ni(2+) is bound by residues His78, His89, His91, and Cys97.

Belongs to the transcriptional regulatory CopG/NikR family. The cofactor is Ni(2+).

Functionally, transcriptional regulator. This chain is Putative nickel-responsive regulator, found in Pyrococcus horikoshii (strain ATCC 700860 / DSM 12428 / JCM 9974 / NBRC 100139 / OT-3).